Consider the following 63-residue polypeptide: Hyphancin-3E (63 aa).

A signal peptide spans 1-22; the sequence is MNFSRILFFVFTCFVALASVSG. Residues 23-26 constitute a propeptide, removed by a dipeptidylpeptidase; that stretch reads APEP. L61 bears the Leucine amide mark.

Belongs to the cecropin family.

The protein localises to the secreted. In terms of biological role, has antibacterial activity. The chain is Hyphancin-3E from Hyphantria cunea (Fall webworm moth).